The following is a 208-amino-acid chain: Large ribosomal subunit protein uL3 (208 aa).

Q149 carries the post-translational modification N5-methylglutamine.

Belongs to the universal ribosomal protein uL3 family. As to quaternary structure, part of the 50S ribosomal subunit. Forms a cluster with proteins L14 and L19. Post-translationally, methylated by PrmB.

In terms of biological role, one of the primary rRNA binding proteins, it binds directly near the 3'-end of the 23S rRNA, where it nucleates assembly of the 50S subunit. The sequence is that of Large ribosomal subunit protein uL3 from Haemophilus ducreyi (strain 35000HP / ATCC 700724).